Reading from the N-terminus, the 254-residue chain is Dihydroorotate dehydrogenase B (NAD(+)), electron transfer subunit (254 aa).

The FAD-binding FR-type domain maps to 1-99 (MLQTEMKVIQ…LGPLGKGFDI (99 aa)). FAD is bound by residues 50–53 (RPIS), 67–69 (LYR), and 74–75 (GT). [2Fe-2S] cluster-binding residues include cysteine 218, cysteine 223, cysteine 226, and cysteine 241.

This sequence belongs to the PyrK family. In terms of assembly, heterotetramer of 2 PyrK and 2 PyrD type B subunits. [2Fe-2S] cluster serves as cofactor. FAD is required as a cofactor.

The protein operates within pyrimidine metabolism; UMP biosynthesis via de novo pathway; orotate from (S)-dihydroorotate (NAD(+) route): step 1/1. Responsible for channeling the electrons from the oxidation of dihydroorotate from the FMN redox center in the PyrD type B subunit to the ultimate electron acceptor NAD(+). The sequence is that of Dihydroorotate dehydrogenase B (NAD(+)), electron transfer subunit from Listeria welshimeri serovar 6b (strain ATCC 35897 / DSM 20650 / CCUG 15529 / CIP 8149 / NCTC 11857 / SLCC 5334 / V8).